Reading from the N-terminus, the 93-residue chain is MPQYASRDVGDPSQIKKNKQSMADLKLRRLTELNNRLREDLERERIPVSQAAKSIITYCNSTRDYMVPSVWGPVPKSEDPYLPQQSSGCCVVM.

A disordered region spans residues 1 to 22 (MPQYASRDVGDPSQIKKNKQSM). A lipid anchor (S-palmitoyl cysteine) is attached at C89. Cysteine methyl ester is present on C90. C90 carries the S-farnesyl cysteine lipid modification. Positions 91–93 (VVM) are cleaved as a propeptide — removed in mature form.

Belongs to the G protein gamma family. G proteins are composed of 3 units, alpha, beta and gamma.

Its subcellular location is the membrane. The polypeptide is Guanine nucleotide-binding protein subunit gamma (gng-1) (Neurospora crassa (strain ATCC 24698 / 74-OR23-1A / CBS 708.71 / DSM 1257 / FGSC 987)).